The primary structure comprises 537 residues: Extracellular exo-inulinase (537 aa).

The signal sequence occupies residues 1 to 19; that stretch reads MAPLSKALSVFMLMGITYA. Positions 40 and 41 each coordinate beta-D-fructose. Residue Asp-41 is the Nucleophile of the active site. N-linked (GlcNAc...) asparagine glycosylation occurs at Asn-49. The beta-D-fructose site is built by Gln-57 and Trp-65. N-linked (GlcNAc...) asparagine glycosylation is present at Asn-67. Ser-103 is a beta-D-fructose binding site. N-linked (GlcNAc...) asparagine glycans are attached at residues Asn-111 and Asn-112. Beta-D-fructose-binding residues include Arg-188, Asp-189, and Glu-241. Glu-241 serves as the catalytic Proton donor/acceptor. 2 N-linked (GlcNAc...) asparagine glycosylation sites follow: Asn-254 and Asn-300. Trp-335 provides a ligand contact to beta-D-fructose. Residues Asn-398 and Asn-430 are each glycosylated (N-linked (GlcNAc...) asparagine).

Belongs to the glycosyl hydrolase 32 family.

It is found in the secreted. It catalyses the reaction Hydrolysis of terminal, non-reducing (2-&gt;1)- and (2-&gt;6)-linked beta-D-fructofuranose residues in fructans.. In terms of biological role, exo-inulinase involved in utilization of the plant storage polymer inulin, consisting of fructooligosaccharides with a degree of polymerization (DP) value from 2 to 60. Splits off terminal fructose units successively from the non-reducing end of the inulin molecule, and also hydrolyzes levan, stachyose and raffinose. Hydrolyzes both beta-2,1- as well as beta-2,6-fructosyl linkages in fructooligosaccharides. This Aspergillus awamori (Black koji mold) protein is Extracellular exo-inulinase.